The primary structure comprises 145 residues: Large-conductance mechanosensitive channel (145 aa).

2 helical membrane-spanning segments follow: residues 14 to 34 (VIDLAVGIIIGAAFTAIVNSL) and 83 to 103 (GAFLSAVINFLIIAWAVFLLV).

Belongs to the MscL family. Homopentamer.

The protein localises to the cell inner membrane. Its function is as follows. Channel that opens in response to stretch forces in the membrane lipid bilayer. May participate in the regulation of osmotic pressure changes within the cell. The protein is Large-conductance mechanosensitive channel of Paracoccus denitrificans (strain Pd 1222).